The following is a 728-amino-acid chain: Phosphoribosylformylglycinamidine synthase subunit PurL (728 aa).

The active site involves His-42. ATP-binding residues include Tyr-45 and Lys-84. Glu-86 is a Mg(2+) binding site. Substrate is bound by residues 87-90 and Arg-109; that span reads SHNH. The Proton acceptor role is filled by His-88. Asp-110 contributes to the Mg(2+) binding site. Gln-237 contributes to the substrate binding site. A Mg(2+)-binding site is contributed by Asp-265. 309 to 311 serves as a coordination point for substrate; it reads ESQ. Residues Asp-491 and Gly-528 each contribute to the ATP site. Asn-529 is a binding site for Mg(2+). Residue Ser-531 participates in substrate binding.

This sequence belongs to the FGAMS family. In terms of assembly, monomer. Part of the FGAM synthase complex composed of 1 PurL, 1 PurQ and 2 PurS subunits.

It is found in the cytoplasm. It catalyses the reaction N(2)-formyl-N(1)-(5-phospho-beta-D-ribosyl)glycinamide + L-glutamine + ATP + H2O = 2-formamido-N(1)-(5-O-phospho-beta-D-ribosyl)acetamidine + L-glutamate + ADP + phosphate + H(+). Its pathway is purine metabolism; IMP biosynthesis via de novo pathway; 5-amino-1-(5-phospho-D-ribosyl)imidazole from N(2)-formyl-N(1)-(5-phospho-D-ribosyl)glycinamide: step 1/2. Part of the phosphoribosylformylglycinamidine synthase complex involved in the purines biosynthetic pathway. Catalyzes the ATP-dependent conversion of formylglycinamide ribonucleotide (FGAR) and glutamine to yield formylglycinamidine ribonucleotide (FGAM) and glutamate. The FGAM synthase complex is composed of three subunits. PurQ produces an ammonia molecule by converting glutamine to glutamate. PurL transfers the ammonia molecule to FGAR to form FGAM in an ATP-dependent manner. PurS interacts with PurQ and PurL and is thought to assist in the transfer of the ammonia molecule from PurQ to PurL. The protein is Phosphoribosylformylglycinamidine synthase subunit PurL of Campylobacter jejuni subsp. jejuni serotype O:2 (strain ATCC 700819 / NCTC 11168).